Consider the following 459-residue polypeptide: Ribulose bisphosphate carboxylase large chain (459 aa).

Lys-4 carries the post-translational modification N6,N6,N6-trimethyllysine. Residues Asn-113 and Thr-163 each coordinate substrate. The active-site Proton acceptor is Lys-165. Residue Lys-167 coordinates substrate. Mg(2+) contacts are provided by Lys-191, Asp-193, and Glu-194. Residue Lys-191 is modified to N6-carboxylysine. The active-site Proton acceptor is His-284. The substrate site is built by Arg-285, His-317, and Ser-369.

Belongs to the RuBisCO large chain family. Type I subfamily. As to quaternary structure, heterohexadecamer of 8 large chains and 8 small chains; disulfide-linked. The disulfide link is formed within the large subunit homodimers. It depends on Mg(2+) as a cofactor. The disulfide bond which can form in the large chain dimeric partners within the hexadecamer appears to be associated with oxidative stress and protein turnover.

The protein resides in the plastid. It localises to the chloroplast. The enzyme catalyses 2 (2R)-3-phosphoglycerate + 2 H(+) = D-ribulose 1,5-bisphosphate + CO2 + H2O. It catalyses the reaction D-ribulose 1,5-bisphosphate + O2 = 2-phosphoglycolate + (2R)-3-phosphoglycerate + 2 H(+). Functionally, ruBisCO catalyzes two reactions: the carboxylation of D-ribulose 1,5-bisphosphate, the primary event in carbon dioxide fixation, as well as the oxidative fragmentation of the pentose substrate in the photorespiration process. Both reactions occur simultaneously and in competition at the same active site. The sequence is that of Ribulose bisphosphate carboxylase large chain from Heuchera micrantha (Alum root).